Consider the following 279-residue polypeptide: Shikimate dehydrogenase (NADP(+)) (279 aa).

Residues 17–19 and Thr64 each bind shikimate; that span reads SLS. The active-site Proton acceptor is the Lys68. Asp80 contacts NADP(+). Residues Asn89 and Asp105 each contribute to the shikimate site. Residues 129 to 133, 153 to 158, and Leu221 contribute to the NADP(+) site; these read GAGGS and NRTAKK. A shikimate-binding site is contributed by Tyr223. Gly245 is a binding site for NADP(+).

Belongs to the shikimate dehydrogenase family. As to quaternary structure, homodimer.

It catalyses the reaction shikimate + NADP(+) = 3-dehydroshikimate + NADPH + H(+). It functions in the pathway metabolic intermediate biosynthesis; chorismate biosynthesis; chorismate from D-erythrose 4-phosphate and phosphoenolpyruvate: step 4/7. Functionally, involved in the biosynthesis of the chorismate, which leads to the biosynthesis of aromatic amino acids. Catalyzes the reversible NADPH linked reduction of 3-dehydroshikimate (DHSA) to yield shikimate (SA). This Idiomarina loihiensis (strain ATCC BAA-735 / DSM 15497 / L2-TR) protein is Shikimate dehydrogenase (NADP(+)).